The primary structure comprises 149 residues: D-aminoacyl-tRNA deacylase (149 aa).

Positions 137-138 (GP) match the Gly-cisPro motif, important for rejection of L-amino acids motif.

This sequence belongs to the DTD family. Homodimer.

The protein localises to the cytoplasm. It carries out the reaction glycyl-tRNA(Ala) + H2O = tRNA(Ala) + glycine + H(+). The catalysed reaction is a D-aminoacyl-tRNA + H2O = a tRNA + a D-alpha-amino acid + H(+). Functionally, an aminoacyl-tRNA editing enzyme that deacylates mischarged D-aminoacyl-tRNAs. Also deacylates mischarged glycyl-tRNA(Ala), protecting cells against glycine mischarging by AlaRS. Acts via tRNA-based rather than protein-based catalysis; rejects L-amino acids rather than detecting D-amino acids in the active site. By recycling D-aminoacyl-tRNA to D-amino acids and free tRNA molecules, this enzyme counteracts the toxicity associated with the formation of D-aminoacyl-tRNA entities in vivo and helps enforce protein L-homochirality. This is D-aminoacyl-tRNA deacylase from Pediococcus pentosaceus (strain ATCC 25745 / CCUG 21536 / LMG 10740 / 183-1w).